Reading from the N-terminus, the 1482-residue chain is Chromosome partition protein MukB (1482 aa).

34 to 41 (GGNGAGKS) is a binding site for ATP. Residues 333-665 (ASDHLNLVQT…LEKQIERLSQ (333 aa)) adopt a coiled-coil conformation. Positions 666–783 (PSGAEDSRMI…ELPLFGRAAR (118 aa)) are flexible hinge. Coiled coils occupy residues 784 to 1116 (ENRL…AKAG) and 1209 to 1260 (VDAI…MLNQ).

Belongs to the SMC family. MukB subfamily. As to quaternary structure, homodimerization via its hinge domain. Binds to DNA via its C-terminal region. Interacts, and probably forms a ternary complex, with MukE and MukF via its C-terminal region. The complex formation is stimulated by calcium or magnesium. Interacts with tubulin-related protein FtsZ.

It is found in the cytoplasm. Its subcellular location is the nucleoid. Plays a central role in chromosome condensation, segregation and cell cycle progression. Functions as a homodimer, which is essential for chromosome partition. Involved in negative DNA supercoiling in vivo, and by this means organize and compact chromosomes. May achieve or facilitate chromosome segregation by condensation DNA from both sides of a centrally located replisome during cell division. The sequence is that of Chromosome partition protein MukB from Photorhabdus laumondii subsp. laumondii (strain DSM 15139 / CIP 105565 / TT01) (Photorhabdus luminescens subsp. laumondii).